Here is a 151-residue protein sequence, read N- to C-terminus: UPF0208 membrane protein CKO_00500 (151 aa).

Helical transmembrane passes span 46–65 and 69–91; these read YAIR…QIAL and LGPA…WWLG.

This sequence belongs to the UPF0208 family.

Its subcellular location is the cell inner membrane. This is UPF0208 membrane protein CKO_00500 from Citrobacter koseri (strain ATCC BAA-895 / CDC 4225-83 / SGSC4696).